The following is a 217-amino-acid chain: Monomethylamine corrinoid protein 2 (217 aa).

Residues 1 to 91 (MTNTEIFDKL…ELEKNKKEGD (91 aa)) form the B12-binding N-terminal domain. A B12-binding domain is found at 93–217 (AGLAITFVAE…AAKVALEVMK (125 aa)). His106 is a binding site for methylcob(III)alamin.

It belongs to the methylamine corrinoid protein family. In terms of assembly, can form a complex with MtmB.

It participates in one-carbon metabolism; methanogenesis from methylamine. Functionally, acts as a methyl group carrier between MtmB and MtbA. The chain is Monomethylamine corrinoid protein 2 (mtmC2) from Methanosarcina barkeri.